A 198-amino-acid chain; its full sequence is UPF0312 protein PFL_5802 (198 aa).

A signal peptide spans 1 to 23; it reads MLKKTLAALAIGSAVLAAGQVMA.

Belongs to the UPF0312 family. Type 1 subfamily.

It localises to the periplasm. The sequence is that of UPF0312 protein PFL_5802 from Pseudomonas fluorescens (strain ATCC BAA-477 / NRRL B-23932 / Pf-5).